The primary structure comprises 429 residues: Saccharopine dehydrogenase-like oxidoreductase (429 aa).

A2 is modified (N-acetylalanine). S217 is subject to Phosphoserine.

This sequence belongs to the saccharopine dehydrogenase family.

In Bos taurus (Bovine), this protein is Saccharopine dehydrogenase-like oxidoreductase (SCCPDH).